The sequence spans 173 residues: Alpha-crystallin A chain (173 aa).

The residue at position 1 (Met1) is an N-acetylmethionine. The interval 1–63 is required for complex formation with BFSP1 and BFSP2; the sequence is MDVTIQHPWF…RTVLDSGISE (63 aa). Residue Gln6 is modified to Deamidated glutamine; partial. Ser45 carries the phosphoserine modification. A deamidated glutamine; partial mark is found at Gln50 and Gln90. The 111-residue stretch at 52–162 folds into the sHSP domain; sequence LFRTVLDSGI…SHSERAIPVS (111 aa). Lys99 carries the N6-acetyllysine modification. His100 contributes to the Zn(2+) binding site. Position 101 is a deamidated asparagine; partial (Asn101). Glu102 and His107 together coordinate Zn(2+). Position 122 is a phosphoserine (Ser122). Asn123 carries the post-translational modification Deamidated asparagine; partial. The cysteines at positions 131 and 142 are disulfide-linked. Gln147 is modified (deamidated glutamine; partial). The segment at 149–173 is disordered; sequence GMDASHSERAIPVSREEKPSSAPSS. The segment covering 153–167 has biased composition (basic and acidic residues); sequence SHSERAIPVSREEKP. Residue His154 coordinates Zn(2+). Ser162 is a glycosylation site (O-linked (GlcNAc) serine).

The protein belongs to the small heat shock protein (HSP20) family. As to quaternary structure, heteromer composed of three CRYAA and one CRYAB subunits. Inter-subunit bridging via zinc ions enhances stability, which is crucial as there is no protein turn over in the lens. Can also form homodimers and homotetramers (dimers of dimers) which serve as the building blocks of homooligomers. Within homooligomers, the zinc-binding motif is created from residues of 3 different molecules. His-100 and Glu-102 from one molecule are ligands of the zinc ion, and His-107 and His-154 residues from additional molecules complete the site with tetrahedral coordination geometry. Part of a complex required for lens intermediate filament formation composed of BFSP1, BFSP2 and CRYAA. Undergoes age-dependent proteolytical cleavage at the C-terminus.

Its subcellular location is the cytoplasm. The protein localises to the nucleus. In terms of biological role, contributes to the transparency and refractive index of the lens. In its oxidized form (absence of intramolecular disulfide bond), acts as a chaperone, preventing aggregation of various proteins under a wide range of stress conditions. Required for the correct formation of lens intermediate filaments as part of a complex composed of BFSP1, BFSP2 and CRYAA. The chain is Alpha-crystallin A chain (CRYAA) from Loxodonta africana (African elephant).